The primary structure comprises 107 residues: NADH-quinone oxidoreductase subunit K (107 aa).

3 consecutive transmembrane segments (helical) span residues 9–29, 36–56, and 68–88; these read IGVN…MFAV, IVIL…FLTF, and FSLF…AIVI.

It belongs to the complex I subunit 4L family. In terms of assembly, NDH-1 is composed of 14 different subunits. Subunits NuoA, H, J, K, L, M, N constitute the membrane sector of the complex.

The protein localises to the cell inner membrane. It carries out the reaction a quinone + NADH + 5 H(+)(in) = a quinol + NAD(+) + 4 H(+)(out). Functionally, NDH-1 shuttles electrons from NADH, via FMN and iron-sulfur (Fe-S) centers, to quinones in the respiratory chain. The immediate electron acceptor for the enzyme in this species is believed to be a menaquinone. Couples the redox reaction to proton translocation (for every two electrons transferred, four hydrogen ions are translocated across the cytoplasmic membrane), and thus conserves the redox energy in a proton gradient. This Chlorobaculum tepidum (strain ATCC 49652 / DSM 12025 / NBRC 103806 / TLS) (Chlorobium tepidum) protein is NADH-quinone oxidoreductase subunit K.